The sequence spans 341 residues: N-acetyl-gamma-glutamyl-phosphate reductase (341 aa).

Residue Cys145 is part of the active site.

The protein belongs to the NAGSA dehydrogenase family. Type 1 subfamily.

The protein localises to the cytoplasm. The catalysed reaction is N-acetyl-L-glutamate 5-semialdehyde + phosphate + NADP(+) = N-acetyl-L-glutamyl 5-phosphate + NADPH + H(+). It functions in the pathway amino-acid biosynthesis; L-arginine biosynthesis; N(2)-acetyl-L-ornithine from L-glutamate: step 3/4. In terms of biological role, catalyzes the NADPH-dependent reduction of N-acetyl-5-glutamyl phosphate to yield N-acetyl-L-glutamate 5-semialdehyde. In Methanothrix thermoacetophila (strain DSM 6194 / JCM 14653 / NBRC 101360 / PT) (Methanosaeta thermophila), this protein is N-acetyl-gamma-glutamyl-phosphate reductase.